The sequence spans 162 residues: NADH-quinone oxidoreductase subunit I (162 aa).

4Fe-4S ferredoxin-type domains lie at 54–83 and 93–122; these read RRYE…INST and SSYE…ETNI. Positions 63, 66, 69, 73, 102, 105, 108, and 112 each coordinate [4Fe-4S] cluster.

Belongs to the complex I 23 kDa subunit family. NDH-1 is composed of 14 different subunits. Subunits NuoA, H, J, K, L, M, N constitute the membrane sector of the complex. [4Fe-4S] cluster serves as cofactor.

The protein localises to the cell inner membrane. The enzyme catalyses a quinone + NADH + 5 H(+)(in) = a quinol + NAD(+) + 4 H(+)(out). NDH-1 shuttles electrons from NADH, via FMN and iron-sulfur (Fe-S) centers, to quinones in the respiratory chain. The immediate electron acceptor for the enzyme in this species is believed to be ubiquinone. Couples the redox reaction to proton translocation (for every two electrons transferred, four hydrogen ions are translocated across the cytoplasmic membrane), and thus conserves the redox energy in a proton gradient. The protein is NADH-quinone oxidoreductase subunit I of Francisella tularensis subsp. holarctica (strain FTNF002-00 / FTA).